We begin with the raw amino-acid sequence, 349 residues long: Terpene synthase 2 (349 aa).

The DDxx(x)D/E motif signature appears at 84–89; that stretch reads DDLFDG. Positions 229 to 237 match the NDxxSxxxD/E motif motif; the sequence is NDCVSYEKE.

Belongs to the terpene synthase family.

The catalysed reaction is (2E,6E)-farnesyl diphosphate = (3S)-(+)-asterisca-2(9),6-diene + diphosphate. The enzyme catalyses (2E)-geranyl diphosphate = (Z)-beta-ocimene + diphosphate. It catalyses the reaction (2E)-geranyl diphosphate + H2O = linalool + diphosphate. Terpene synthase that converts its substrate farnesyl diphosphate (FPP) into the sesquiterpene (3S)-(+)-asterisca-2(9),6-diene. Is also able to convert geranyl diphosphate (GPP) into a mixture of monoterpenes including (Z)-beta-ocimene, allo-ocimene and linalool. The protein is Terpene synthase 2 of Dictyostelium discoideum (Social amoeba).